The chain runs to 239 residues: MKFTGPLVPATLVQRYKRFLFDAILTDGTAITGSCPNTGSMRGLTTPGSRIWLSEHDSTTRKYRHMLEIVEADGTLVGINTGLPNRIAEEAISAGQVSNLDSYDTLRREQRYGRNSRIDILLSDAEKGLAYVEVKNVHFSRLSGLAEFPDSPTERGAKHLEELGDMVAAGHRAIMLYLVQRDDCSRFRICRELDPVYARAFERASTRGVEAYAVKCQVSPLQIVATGPMMVDEAVPAVL.

It belongs to the SfsA family.

This chain is Sugar fermentation stimulation protein homolog, found in Sinorhizobium medicae (strain WSM419) (Ensifer medicae).